The chain runs to 94 residues: Neutrophil defensin 3 (94 aa).

The N-terminal stretch at 1–19 (MRTLAILAAILLVALQAQA) is a signal peptide. Positions 20-38 (EPLQARADEVAAAPEQIAA) are excised as a propeptide. 3 cysteine pairs are disulfide-bonded: Cys-66–Cys-94, Cys-68–Cys-83, and Cys-73–Cys-93.

It belongs to the alpha-defensin family. Dimer. As to quaternary structure, (Microbial infection) Interacts with herpes virus 1 HHV-1 envelope glycoprotein B; this interaction inhibits viral infection.

It is found in the secreted. Its function is as follows. Effector molecule of the innate immune system that acts via antibiotic-like properties against a broad array of infectious agents including bacteria, fungi, and viruses. Possesses the ability to neutralize bacterial toxins such as B.anthracis lethal factor, Clostridium difficile cytotoxin B as well as leukocidin produced by Staphylococcus aureus. Also blocks herpes simplex virus infection by interacting with envelope glycoprotein B and thus preventing its binding to heparan sulfate, the receptor for attachment. The polypeptide is Neutrophil defensin 3 (DEFA3) (Homo sapiens (Human)).